The chain runs to 447 residues: Tubulin beta chain (447 aa).

Residues glutamine 11, glutamate 69, serine 138, glycine 142, threonine 143, glycine 144, asparagine 204, and asparagine 226 each coordinate GTP. Glutamate 69 serves as a coordination point for Mg(2+).

This sequence belongs to the tubulin family. Dimer of alpha and beta chains. A typical microtubule is a hollow water-filled tube with an outer diameter of 25 nm and an inner diameter of 15 nM. Alpha-beta heterodimers associate head-to-tail to form protofilaments running lengthwise along the microtubule wall with the beta-tubulin subunit facing the microtubule plus end conferring a structural polarity. Microtubules usually have 13 protofilaments but different protofilament numbers can be found in some organisms and specialized cells. Mg(2+) serves as cofactor.

It is found in the cytoplasm. It localises to the cytoskeleton. Functionally, tubulin is the major constituent of microtubules, a cylinder consisting of laterally associated linear protofilaments composed of alpha- and beta-tubulin heterodimers. Microtubules grow by the addition of GTP-tubulin dimers to the microtubule end, where a stabilizing cap forms. Below the cap, tubulin dimers are in GDP-bound state, owing to GTPase activity of alpha-tubulin. This is Tubulin beta chain from Trichophyton rubrum (Athlete's foot fungus).